A 137-amino-acid chain; its full sequence is Putative pre-16S rRNA nuclease (137 aa).

Belongs to the YqgF nuclease family.

The protein resides in the cytoplasm. In terms of biological role, could be a nuclease involved in processing of the 5'-end of pre-16S rRNA. In Chromobacterium violaceum (strain ATCC 12472 / DSM 30191 / JCM 1249 / CCUG 213 / NBRC 12614 / NCIMB 9131 / NCTC 9757 / MK), this protein is Putative pre-16S rRNA nuclease.